The following is a 504-amino-acid chain: Sensor protein FixL (504 aa).

A disordered region spans residues 1–21 (MTDTPTQALPPKAPQAGPTVP). At 1 to 50 (MTDTPTQALPPKAPQAGPTVPGTVRRAVPGSAAAALVIAASHFAALSAFD) the chain is on the cytoplasmic side. The helical transmembrane segment at 51 to 71 (PRILLVLLVIVVLASSGGLFA) threads the bilayer. The Periplasmic segment spans residues 72–99 (GLAATAVSALGLALRGLLSGDTVVADWQ). A helical transmembrane segment spans residues 100–118 (SLGLLTIAGAGIAVLGERL). Topologically, residues 119–504 (RRTRLDAVAR…TVDEEAMNDA (386 aa)) are cytoplasmic. The 68-residue stretch at 135 to 202 (REAHLSSILD…QHDLYLSRYL (68 aa)) folds into the PAS domain. The PAC domain maps to 203 to 262 (TTGERRIIGIGRVVTGERKDGATFPMELAVGEMHSVSGRFFTGFIRDLTERQNTEARLQE). Positions 282 to 497 (TLAHELNQPL…IFRFTLRTVD (216 aa)) constitute a Histidine kinase domain. The residue at position 285 (His-285) is a Phosphohistidine; by autocatalysis.

Requires heme as cofactor.

The protein localises to the cell inner membrane. The catalysed reaction is ATP + protein L-histidine = ADP + protein N-phospho-L-histidine.. With respect to regulation, the heme moiety regulates the kinase activity. Its function is as follows. Putative oxygen sensor; modulates the activity of FixJ, a transcriptional activator of nitrogen fixation fixK gene. FixL probably acts as a kinase that phosphorylates FixJ. This is Sensor protein FixL (fixL) from Azorhizobium caulinodans (strain ATCC 43989 / DSM 5975 / JCM 20966 / LMG 6465 / NBRC 14845 / NCIMB 13405 / ORS 571).